A 170-amino-acid polypeptide reads, in one-letter code: MVDTTKNTKLFTSYGVSTSRTVSPEMAAKLISKAKRPLLMVGTLTLEPEILDRVVKISKAANIPIAATGSSMASLVDKDVDAKYINAHMLGFYLTDPKWPGLDGNGNYDMVIAIGFKKYYINQVLSAAKNFSNLKTIAIERGYIQNATMSFGNLSKADYYAALDELINAL.

The protein belongs to the CdhB family. In terms of assembly, heterotetramer of two alpha and two epsilon subunits. The ACDS complex is made up of alpha, epsilon, beta, gamma and delta subunits with a probable stoichiometry of (alpha(2)epsilon(2))(4)-beta(8)-(gamma(1)delta(1))(8).

The protein operates within one-carbon metabolism; methanogenesis from acetate. In terms of biological role, part of a complex that catalyzes the reversible cleavage of acetyl-CoA, allowing growth on acetate as sole source of carbon and energy. The alpha-epsilon subcomponent functions as a carbon monoxide dehydrogenase. The precise role of the epsilon subunit is unclear; it may have a stabilizing role within the alpha(2)epsilon(2) component and/or be involved in electron transfer to FAD during a potential FAD-mediated CO oxidation. In Methanosarcina barkeri (strain Fusaro / DSM 804), this protein is Acetyl-CoA decarbonylase/synthase complex subunit epsilon 1.